Reading from the N-terminus, the 286-residue chain is Prohibitin-6, mitochondrial (286 aa).

Residues 1-12 (MNFKNVKVPKGP) are Mitochondrial matrix-facing. The chain crosses the membrane as a helical; Signal-anchor for type II membrane protein span at residues 13 to 35 (GGGVIAAVVIGGLSLYGATHTLY). Topologically, residues 36–286 (NVDGGHRAIV…AMDLDVKPKK (251 aa)) are mitochondrial intermembrane.

It belongs to the prohibitin family. As to quaternary structure, component of a prohibitin multimeric complex in mitochondrial membranes. Mostly expressed in proliferative tissues, including vasculature, shoot and root apical tissues.

Its subcellular location is the mitochondrion inner membrane. Its function is as follows. Prohibitin probably acts as a holdase/unfoldase for the stabilization of newly synthesized mitochondrial proteins. This chain is Prohibitin-6, mitochondrial (PHB6), found in Arabidopsis thaliana (Mouse-ear cress).